A 426-amino-acid chain; its full sequence is Enolase (426 aa).

Residues 32 to 53 form a disordered region; sequence TGRAAVPSGASTGAYEAHEQRD. Q163 contributes to the (2R)-2-phosphoglycerate binding site. E205 acts as the Proton donor in catalysis. Mg(2+)-binding residues include D242, E285, and D312. Residues K337, R366, S367, and K388 each contribute to the (2R)-2-phosphoglycerate site. The Proton acceptor role is filled by K337.

Belongs to the enolase family. Mg(2+) serves as cofactor.

The protein resides in the cytoplasm. It is found in the secreted. Its subcellular location is the cell surface. It catalyses the reaction (2R)-2-phosphoglycerate = phosphoenolpyruvate + H2O. The protein operates within carbohydrate degradation; glycolysis; pyruvate from D-glyceraldehyde 3-phosphate: step 4/5. Catalyzes the reversible conversion of 2-phosphoglycerate (2-PG) into phosphoenolpyruvate (PEP). It is essential for the degradation of carbohydrates via glycolysis. The chain is Enolase from Hyphomonas neptunium (strain ATCC 15444).